A 349-amino-acid chain; its full sequence is Isopentenyl-diphosphate delta-isomerase (349 aa).

A substrate-binding site is contributed by 7-8 (RK). Residues Ser-65, 66–68 (SMT), Ser-96, and Asn-124 each bind FMN. 96 to 98 (SQR) contributes to the substrate binding site. Gln-159 serves as a coordination point for substrate. Glu-160 serves as a coordination point for Mg(2+). Residues Lys-191, Thr-221, 271-273 (GIR), and 292-293 (AA) contribute to the FMN site.

The protein belongs to the IPP isomerase type 2 family. In terms of assembly, homooctamer. Dimer of tetramers. It depends on FMN as a cofactor. NADPH is required as a cofactor. Mg(2+) serves as cofactor.

The protein resides in the cytoplasm. The enzyme catalyses isopentenyl diphosphate = dimethylallyl diphosphate. In terms of biological role, involved in the biosynthesis of isoprenoids. Catalyzes the 1,3-allylic rearrangement of the homoallylic substrate isopentenyl (IPP) to its allylic isomer, dimethylallyl diphosphate (DMAPP). In Synechocystis sp. (strain ATCC 27184 / PCC 6803 / Kazusa), this protein is Isopentenyl-diphosphate delta-isomerase.